The sequence spans 314 residues: Polyamine aminopropyltransferase (314 aa).

Positions 4–241 (GMYFFEHVTP…LNFGFLLASD (238 aa)) constitute a PABS domain. Position 33 (Gln-33) interacts with S-methyl-5'-thioadenosine. His-64 and Glu-88 together coordinate spermidine. S-methyl-5'-thioadenosine is bound by residues Asp-108 and 140–141 (DA). The active-site Proton acceptor is the Asp-158. Pro-168 lines the S-methyl-5'-thioadenosine pocket.

The protein belongs to the spermidine/spermine synthase family. In terms of assembly, homodimer or homotetramer.

It is found in the cytoplasm. The enzyme catalyses S-adenosyl 3-(methylsulfanyl)propylamine + putrescine = S-methyl-5'-thioadenosine + spermidine + H(+). The protein operates within amine and polyamine biosynthesis; spermidine biosynthesis; spermidine from putrescine: step 1/1. Functionally, catalyzes the irreversible transfer of a propylamine group from the amino donor S-adenosylmethioninamine (decarboxy-AdoMet) to putrescine (1,4-diaminobutane) to yield spermidine. The protein is Polyamine aminopropyltransferase of Thermus thermophilus (strain ATCC BAA-163 / DSM 7039 / HB27).